The sequence spans 197 residues: Fe/S biogenesis protein NfuA (197 aa).

Cys155 and Cys158 together coordinate [4Fe-4S] cluster.

It belongs to the NfuA family. In terms of assembly, homodimer. Requires [4Fe-4S] cluster as cofactor.

Its function is as follows. Involved in iron-sulfur cluster biogenesis. Binds a 4Fe-4S cluster, can transfer this cluster to apoproteins, and thereby intervenes in the maturation of Fe/S proteins. Could also act as a scaffold/chaperone for damaged Fe/S proteins. This chain is Fe/S biogenesis protein NfuA, found in Pseudomonas syringae pv. syringae (strain B728a).